The following is a 414-amino-acid chain: Histidine--tRNA ligase (414 aa).

This sequence belongs to the class-II aminoacyl-tRNA synthetase family. As to quaternary structure, homodimer.

The protein resides in the cytoplasm. The catalysed reaction is tRNA(His) + L-histidine + ATP = L-histidyl-tRNA(His) + AMP + diphosphate + H(+). The protein is Histidine--tRNA ligase of Rickettsia africae (strain ESF-5).